We begin with the raw amino-acid sequence, 360 residues long: Putative F-box protein At1g65770 (360 aa).

One can recognise an F-box domain in the interval alanine 2 to threonine 50.

The polypeptide is Putative F-box protein At1g65770 (Arabidopsis thaliana (Mouse-ear cress)).